The chain runs to 306 residues: Methionyl-tRNA formyltransferase (306 aa).

Ser110–Pro113 serves as a coordination point for (6S)-5,6,7,8-tetrahydrofolate.

This sequence belongs to the Fmt family.

It carries out the reaction L-methionyl-tRNA(fMet) + (6R)-10-formyltetrahydrofolate = N-formyl-L-methionyl-tRNA(fMet) + (6S)-5,6,7,8-tetrahydrofolate + H(+). In terms of biological role, attaches a formyl group to the free amino group of methionyl-tRNA(fMet). The formyl group appears to play a dual role in the initiator identity of N-formylmethionyl-tRNA by promoting its recognition by IF2 and preventing the misappropriation of this tRNA by the elongation apparatus. This chain is Methionyl-tRNA formyltransferase, found in Brucella suis biovar 1 (strain 1330).